Here is a 689-residue protein sequence, read N- to C-terminus: Transcription termination factor Rho (689 aa).

The segment covering 1–20 has biased composition (polar residues); the sequence is MPRTPKNQNLEQNTQTQSLT. 2 disordered regions span residues 1-90 and 151-213; these read MPRT…KQPV and AQAQ…NRNN. A compositionally biased stretch (basic residues) spans 52 to 65; sequence PKRRGRKPNPKTKA. 2 stretches are compositionally biased toward low complexity: residues 170 to 183 and 191 to 213; these read NAQQQGEAQAQNGE and NNQNGKFNKFNKNNKFNKNNRNN. One can recognise a Rho RNA-BD domain in the interval 287–362; that stretch reads IIYTEGVLEV…RRIDRVNFEE (76 aa). Residues 405–410, 417–422, and arginine 448 contribute to the ATP site; these read GKGQRS and RTGKTV.

Belongs to the Rho family. As to quaternary structure, homohexamer. The homohexamer assembles into an open ring structure.

Facilitates transcription termination by a mechanism that involves Rho binding to the nascent RNA, activation of Rho's RNA-dependent ATPase activity, and release of the mRNA from the DNA template. The chain is Transcription termination factor Rho from Fibrobacter succinogenes (strain ATCC 19169 / S85).